A 390-amino-acid polypeptide reads, in one-letter code: Protein YghO (390 aa).

This is Protein YghO (yghO) from Escherichia coli (strain K12).